A 147-amino-acid chain; its full sequence is uncharacterized protein (147 aa).

This is an uncharacterized protein from Mycoplasma genitalium (strain ATCC 33530 / DSM 19775 / NCTC 10195 / G37) (Mycoplasmoides genitalium).